The chain runs to 367 residues: Phosphoribosylaminoimidazole-succinocarboxamide synthase (367 aa).

Belongs to the SAICAR synthetase family.

The catalysed reaction is 5-amino-1-(5-phospho-D-ribosyl)imidazole-4-carboxylate + L-aspartate + ATP = (2S)-2-[5-amino-1-(5-phospho-beta-D-ribosyl)imidazole-4-carboxamido]succinate + ADP + phosphate + 2 H(+). It participates in purine metabolism; IMP biosynthesis via de novo pathway; 5-amino-1-(5-phospho-D-ribosyl)imidazole-4-carboxamide from 5-amino-1-(5-phospho-D-ribosyl)imidazole-4-carboxylate: step 1/2. In Shewanella baltica (strain OS155 / ATCC BAA-1091), this protein is Phosphoribosylaminoimidazole-succinocarboxamide synthase.